The sequence spans 745 residues: Chitin synthase D (745 aa).

The next 5 helical transmembrane spans lie at 26-46 (LAHR…PVHL), 55-75 (VLML…IPWL), 412-432 (TTAL…SSIN), 434-454 (LPVG…FYLG), and 464-484 (LFPL…VYGI). 2 disordered regions span residues 613 to 635 (TGDN…SLHQ) and 672 to 745 (ILPH…ESMV). The span at 707–720 (NASTRGSMEGNTPE) shows a compositional bias: polar residues.

The protein belongs to the chitin synthase family. Class VI subfamily.

It localises to the cell membrane. It catalyses the reaction [(1-&gt;4)-N-acetyl-beta-D-glucosaminyl](n) + UDP-N-acetyl-alpha-D-glucosamine = [(1-&gt;4)-N-acetyl-beta-D-glucosaminyl](n+1) + UDP + H(+). Polymerizes chitin, a structural polymer of the cell wall and septum, by transferring the sugar moiety of UDP-GlcNAc to the non-reducing end of the growing chitin polymer. This chain is Chitin synthase D (chsD), found in Aspergillus fumigatus (strain ATCC MYA-4609 / CBS 101355 / FGSC A1100 / Af293) (Neosartorya fumigata).